A 283-amino-acid polypeptide reads, in one-letter code: MSAYTHPMERELSGLSSRGNSELGSRYSIESGCYMTSLAASIFIASLVTFGVLMITLLIALSTMLQSCENRNIAIVEAQRLDESFGYCKILSLHSQLNSLDEESELPLLCRDVALHRIKQGIYLRELNFTIQMALTYFQTIKPMNDNCDVVVIDIDDTNLLEQDSYYMKYIEEAKHQKSILILALYSKLRSQGYSMVLLSRRPETERNATIEQLKSRGYSDWSHLIMSREDTRQKEELERGHRVIGVIGNHMDVLRGQWNWQSKRLFKLPSLTYDDVLDYNER.

The segment at 1-21 is disordered; sequence MSAYTHPMERELSGLSSRGNS. The chain crosses the membrane as a helical span at residues 41–61; the sequence is SIFIASLVTFGVLMITLLIAL.

This sequence belongs to the APS1/VSP family.

The protein resides in the membrane. This is an uncharacterized protein from Arabidopsis thaliana (Mouse-ear cress).